The chain runs to 476 residues: RNA-binding protein 45 (476 aa).

Residues 1–20 (MDEAGSSASGGGFRPGVDSL) are disordered. 2 RRM domains span residues 26–106 (SRIF…IAQS) and 121–195 (TRIF…PKNK). K34 is covalently cross-linked (Glycyl lysine isopeptide (Lys-Gly) (interchain with G-Cter in SUMO2)). A phosphoserine mark is found at S199 and S464. Residues 392–464 (ERLFIVFNPH…VRLKVMLADS (73 aa)) form the RRM 3 domain.

It is found in the cytoplasm. The protein localises to the nucleus. RNA-binding protein with binding specificity for poly(C). May play an important role in neural development. This Homo sapiens (Human) protein is RNA-binding protein 45 (RBM45).